An 81-amino-acid polypeptide reads, in one-letter code: Acyl carrier protein (81 aa).

The 76-residue stretch at 2-77 (ASVEEKVKQI…DAVDYITAHA (76 aa)) folds into the Carrier domain. An O-(pantetheine 4'-phosphoryl)serine modification is found at serine 37.

This sequence belongs to the acyl carrier protein (ACP) family. In terms of processing, 4'-phosphopantetheine is transferred from CoA to a specific serine of apo-ACP by AcpS. This modification is essential for activity because fatty acids are bound in thioester linkage to the sulfhydryl of the prosthetic group.

It is found in the cytoplasm. It functions in the pathway lipid metabolism; fatty acid biosynthesis. Carrier of the growing fatty acid chain in fatty acid biosynthesis. The protein is Acyl carrier protein of Koribacter versatilis (strain Ellin345).